Reading from the N-terminus, the 24-residue chain is MDTQGFSCLLLLISEIDLSVKRRI.

Belongs to the humanin family.

It is found in the secreted. The protein resides in the cytoplasm. Functionally, plays a role as a neuroprotective and antiapoptotic factor. In Homo sapiens (Human), this protein is Humanin-like 13.